The following is a 186-amino-acid chain: UPF0301 protein Swoo_1337 (186 aa).

This sequence belongs to the UPF0301 (AlgH) family.

The sequence is that of UPF0301 protein Swoo_1337 from Shewanella woodyi (strain ATCC 51908 / MS32).